The sequence spans 418 residues: LL-diaminopimelate aminotransferase (418 aa).

Substrate-binding residues include Tyr-25 and Gly-52. Residues Tyr-78, Ser-115 to Lys-116, Tyr-140, Asn-190, Tyr-221, and Ser-248 to Ser-250 contribute to the pyridoxal 5'-phosphate site. Substrate contacts are provided by Lys-116, Tyr-140, and Asn-190. Lys-251 carries the N6-(pyridoxal phosphate)lysine modification. Residue Arg-259 participates in pyridoxal 5'-phosphate binding.

This sequence belongs to the class-I pyridoxal-phosphate-dependent aminotransferase family. In terms of assembly, homodimer. Pyridoxal 5'-phosphate is required as a cofactor.

The protein localises to the cytoplasm. The enzyme catalyses (2S,6S)-2,6-diaminopimelate + 2-oxoglutarate = (S)-2,3,4,5-tetrahydrodipicolinate + L-glutamate + H2O + H(+). It functions in the pathway amino-acid biosynthesis; L-lysine biosynthesis via DAP pathway; LL-2,6-diaminopimelate from (S)-tetrahydrodipicolinate (aminotransferase route): step 1/1. Involved in the synthesis of meso-diaminopimelate (m-DAP or DL-DAP), required for both lysine and peptidoglycan biosynthesis. Catalyzes the direct conversion of tetrahydrodipicolinate to LL-diaminopimelate, a reaction that requires three enzymes in E.coli. The polypeptide is LL-diaminopimelate aminotransferase (dapL) (Methanocaldococcus jannaschii (strain ATCC 43067 / DSM 2661 / JAL-1 / JCM 10045 / NBRC 100440) (Methanococcus jannaschii)).